The primary structure comprises 1057 residues: Protein transport protein Sec16B (1057 aa).

Over residues 1–15 the composition is skewed to polar residues; sequence MELWVPQTQGRTTGP. The segment at 1–86 is disordered; it reads MELWVPQTQG…VSGADYLKGS (86 aa). The segment covering 45–63 has biased composition (basic and acidic residues); that stretch reads QDTHKNSKPQQDPRDDHQQ. 4 positions are modified to phosphoserine: Ser70, Ser137, Ser161, and Ser185. Positions 185 to 220 are disordered; the sequence is SAFGLEQPGEFFPESGAQKQKPSLTSKSNLLQQHES. The segment covering 201–213 has biased composition (polar residues); it reads AQKQKPSLTSKSN. Position 245 is a phosphoserine (Ser245). Residues 263–708 are central conserved domain (CCD); required for localization to endoplasmic reticulum exit sites; that stretch reads APMRFYVPHV…KHKELEQTRT (446 aa). Positions 704 to 715 are enriched in basic and acidic residues; it reads EQTRTGDLRDPD. Disordered regions lie at residues 704–778 and 849–1057; these read EQTR…TYSE and AVIS…SQPC. Residues 737–764 show a composition bias toward polar residues; sequence GQQNYSEDSEYSSALWPTSEQTSLTNPT. Thr856 bears the Phosphothreonine mark. 4 positions are modified to phosphoserine: Ser866, Ser869, Ser872, and Ser881. The span at 883-903 shows a compositional bias: basic and acidic residues; the sequence is GADKPPHPDASQKEKLRDGKN. A compositionally biased stretch (low complexity) spans 906–926; that stretch reads SSGFGWFSWFRSKPASSVSTS. The segment covering 927 to 938 has biased composition (acidic residues); it reads GDEDSVDSSDSE. The segment covering 990-999 has biased composition (gly residues); sequence EGVGIGGFSG. The span at 1028-1043 shows a compositional bias: polar residues; sequence NPSQVPQLPTASSLNR.

It belongs to the SEC16 family. As to quaternary structure, SEC16A and SEC16B are each present in multiple copies in a heteromeric complex. Interacts with TFG. Interacts with SEC13. As to expression, liver, kidney, heart, spleen and brain.

It is found in the endoplasmic reticulum membrane. It localises to the golgi apparatus membrane. Plays a role in the organization of the endoplasmic reticulum exit sites (ERES), also known as transitional endoplasmic reticulum (tER). Required for secretory cargo traffic from the endoplasmic reticulum to the Golgi apparatus. Involved in peroxisome biogenesis. Regulates the transport of peroxisomal biogenesis factors PEX3 and PEX16 from the ER to peroxisomes. This is Protein transport protein Sec16B (Sec16b) from Rattus norvegicus (Rat).